A 56-amino-acid polypeptide reads, in one-letter code: Preprotein translocase subunit SecG (56 aa).

Topologically, residues 1-29 are cytoplasmic; that stretch reads MAKEKATLPPTGAGLMRFFDEDTRAVKVS. Residues 30 to 49 traverse the membrane as a helical segment; sequence PKGVIALTLLLIAFEFILHM. Topologically, residues 50–56 are extracellular; it reads FGSSIFG.

It belongs to the SEC61-beta family. As to quaternary structure, component of the protein translocase complex. Heterotrimer consisting of alpha (SecY), beta (SecG) and gamma (SecE) subunits. Can form oligomers of the heterotrimer.

The protein resides in the cell membrane. Its function is as follows. Involved in protein export. The function of the beta subunit is unknown, but it may be involved in stabilization of the trimeric complex. This is Preprotein translocase subunit SecG from Thermococcus kodakarensis (strain ATCC BAA-918 / JCM 12380 / KOD1) (Pyrococcus kodakaraensis (strain KOD1)).